The sequence spans 681 residues: DNA ligase (681 aa).

NAD(+) contacts are provided by residues Asp-34–Asp-38, Ser-83–Leu-84, and Glu-115. Lys-117 functions as the N6-AMP-lysine intermediate in the catalytic mechanism. Residues Arg-138, Glu-185, Lys-301, and Lys-325 each coordinate NAD(+). The Zn(2+) site is built by Cys-419, Cys-422, Cys-437, and Cys-443. One can recognise a BRCT domain in the interval Arg-602 to Arg-681.

It belongs to the NAD-dependent DNA ligase family. LigA subfamily. Requires Mg(2+) as cofactor. The cofactor is Mn(2+).

The catalysed reaction is NAD(+) + (deoxyribonucleotide)n-3'-hydroxyl + 5'-phospho-(deoxyribonucleotide)m = (deoxyribonucleotide)n+m + AMP + beta-nicotinamide D-nucleotide.. Its function is as follows. DNA ligase that catalyzes the formation of phosphodiester linkages between 5'-phosphoryl and 3'-hydroxyl groups in double-stranded DNA using NAD as a coenzyme and as the energy source for the reaction. It is essential for DNA replication and repair of damaged DNA. In Chloroflexus aggregans (strain MD-66 / DSM 9485), this protein is DNA ligase.